Reading from the N-terminus, the 170-residue chain is ATP synthase subunit b (170 aa).

The helical transmembrane segment at 11–31 (AFTFGDAFFTLFAFAILLVLI) threads the bilayer.

It belongs to the ATPase B chain family. F-type ATPases have 2 components, F(1) - the catalytic core - and F(0) - the membrane proton channel. F(1) has five subunits: alpha(3), beta(3), gamma(1), delta(1), epsilon(1). F(0) has three main subunits: a(1), b(2) and c(10-14). The alpha and beta chains form an alternating ring which encloses part of the gamma chain. F(1) is attached to F(0) by a central stalk formed by the gamma and epsilon chains, while a peripheral stalk is formed by the delta and b chains.

The protein localises to the cell membrane. F(1)F(0) ATP synthase produces ATP from ADP in the presence of a proton or sodium gradient. F-type ATPases consist of two structural domains, F(1) containing the extramembraneous catalytic core and F(0) containing the membrane proton channel, linked together by a central stalk and a peripheral stalk. During catalysis, ATP synthesis in the catalytic domain of F(1) is coupled via a rotary mechanism of the central stalk subunits to proton translocation. In terms of biological role, component of the F(0) channel, it forms part of the peripheral stalk, linking F(1) to F(0). The sequence is that of ATP synthase subunit b from Listeria monocytogenes serotype 4b (strain F2365).